Consider the following 170-residue polypeptide: MAQIRIHEVNTRIENEVEVSKFLQEEGVLYEKWNISKLPTHLNENYSLTDENKAEILAIFSKEIADVSARRGYKAHDVISLSSSTPNLDELLINFQKEHHHTDDEVRFIVSGHGIFAIEGKDGKFFDVELEPGDLISVPENARHYFTLQDDRQVVAIRIFVTTEGWVPIY.

Fe(2+)-binding residues include histidine 99, histidine 101, glutamate 105, and histidine 144. The Ni(2+) site is built by histidine 99, histidine 101, glutamate 105, and histidine 144.

It belongs to the acireductone dioxygenase (ARD) family. As to quaternary structure, monomer. Requires Fe(2+) as cofactor. It depends on Ni(2+) as a cofactor.

It catalyses the reaction 1,2-dihydroxy-5-(methylsulfanyl)pent-1-en-3-one + O2 = 3-(methylsulfanyl)propanoate + CO + formate + 2 H(+). The enzyme catalyses 1,2-dihydroxy-5-(methylsulfanyl)pent-1-en-3-one + O2 = 4-methylsulfanyl-2-oxobutanoate + formate + 2 H(+). The protein operates within amino-acid biosynthesis; L-methionine biosynthesis via salvage pathway; L-methionine from S-methyl-5-thio-alpha-D-ribose 1-phosphate: step 5/6. In terms of biological role, catalyzes 2 different reactions between oxygen and the acireductone 1,2-dihydroxy-3-keto-5-methylthiopentene (DHK-MTPene) depending upon the metal bound in the active site. Fe-containing acireductone dioxygenase (Fe-ARD) produces formate and 2-keto-4-methylthiobutyrate (KMTB), the alpha-ketoacid precursor of methionine in the methionine recycle pathway. Ni-containing acireductone dioxygenase (Ni-ARD) produces methylthiopropionate, carbon monoxide and formate, and does not lie on the methionine recycle pathway. The sequence is that of Acireductone dioxygenase from Bacillus cereus (strain ATCC 14579 / DSM 31 / CCUG 7414 / JCM 2152 / NBRC 15305 / NCIMB 9373 / NCTC 2599 / NRRL B-3711).